A 358-amino-acid chain; its full sequence is 3-dehydroquinate synthase (358 aa).

Residues 69-74, 103-107, 127-128, lysine 140, lysine 149, and 167-170 contribute to the NAD(+) site; these read DGEAHK, GVIGD, TT, and CLRT. Glutamate 182, histidine 245, and histidine 262 together coordinate Zn(2+).

It belongs to the sugar phosphate cyclases superfamily. Dehydroquinate synthase family. Co(2+) is required as a cofactor. Requires Zn(2+) as cofactor. NAD(+) serves as cofactor.

The protein localises to the cytoplasm. It catalyses the reaction 7-phospho-2-dehydro-3-deoxy-D-arabino-heptonate = 3-dehydroquinate + phosphate. It participates in metabolic intermediate biosynthesis; chorismate biosynthesis; chorismate from D-erythrose 4-phosphate and phosphoenolpyruvate: step 2/7. Functionally, catalyzes the conversion of 3-deoxy-D-arabino-heptulosonate 7-phosphate (DAHP) to dehydroquinate (DHQ). This Tolumonas auensis (strain DSM 9187 / NBRC 110442 / TA 4) protein is 3-dehydroquinate synthase.